The primary structure comprises 429 residues: Mannose-6-phosphate isomerase (429 aa).

Zn(2+)-binding residues include glutamine 110, histidine 112, glutamate 137, and histidine 282. Arginine 301 is a catalytic residue.

The protein belongs to the mannose-6-phosphate isomerase type 1 family. The cofactor is Zn(2+).

It is found in the cytoplasm. It carries out the reaction D-mannose 6-phosphate = D-fructose 6-phosphate. Its pathway is nucleotide-sugar biosynthesis; GDP-alpha-D-mannose biosynthesis; alpha-D-mannose 1-phosphate from D-fructose 6-phosphate: step 1/2. Involved in the synthesis of the GDP-mannose and dolichol-phosphate-mannose required for a number of critical mannosyl transfer reactions. This Candida glabrata (strain ATCC 2001 / BCRC 20586 / JCM 3761 / NBRC 0622 / NRRL Y-65 / CBS 138) (Yeast) protein is Mannose-6-phosphate isomerase (PMI1).